Here is a 408-residue protein sequence, read N- to C-terminus: MSAEIKKTGVKKVVLAYSGGLDTSAIIPWLKETYDDCEIVAFCADVGQGEAELEGLHEKAIASGASECYIVDLKEELVADYIYPTIATGAIYEGTYLLGTSMARPIIAKAQVEVARKVGADAVCHGCTGKGNDQVRFEGCFAALAPDLKVIAPWREWEMVSREDLLDYLAERNIETTASATKIYSRDANAWHISHEGGELEDPWNEPTKGVWTMTVAPEDAPDKPEYVTIDIEQGKITKVNGELLSPYAALMVLNEIAGAHGVGRIDITENRLVGMKSRGCYETPGGTVMFAALRAIEELVLDKSSREWREQVGAQMAHLVYDGRWFTPLCESLLGASQPLANLVNGEVVIKLYKGQAQAVQKRSPNSLYSEEFATFGEDDVYNQKDAEGFIRLYSLASRIRALNSKS.

Residues 16 to 24 and A44 contribute to the ATP site; that span reads AYSGGLDTS. Y96 and S101 together coordinate L-citrulline. Position 126 (G126) interacts with ATP. Positions 128, 132, and 133 each coordinate L-aspartate. N132 is an L-citrulline binding site. R136, S185, S194, E270, and Y282 together coordinate L-citrulline.

It belongs to the argininosuccinate synthase family. Type 1 subfamily. Homotetramer.

The protein resides in the cytoplasm. The enzyme catalyses L-citrulline + L-aspartate + ATP = 2-(N(omega)-L-arginino)succinate + AMP + diphosphate + H(+). It participates in amino-acid biosynthesis; L-arginine biosynthesis; L-arginine from L-ornithine and carbamoyl phosphate: step 2/3. The polypeptide is Argininosuccinate synthase (Shewanella woodyi (strain ATCC 51908 / MS32)).